The primary structure comprises 280 residues: Energy-coupling factor transporter ATP-binding protein EcfA1 (280 aa).

The ABC transporter domain occupies 6 to 244 (IECKNVVYKY…VPLMKNIGLD (239 aa)). An ATP-binding site is contributed by 43 to 50 (GHNGSGKS).

This sequence belongs to the ABC transporter superfamily. Energy-coupling factor EcfA family. As to quaternary structure, forms a stable energy-coupling factor (ECF) transporter complex composed of 2 membrane-embedded substrate-binding proteins (S component), 2 ATP-binding proteins (A component) and 2 transmembrane proteins (T component).

It localises to the cell membrane. Its function is as follows. ATP-binding (A) component of a common energy-coupling factor (ECF) ABC-transporter complex. Unlike classic ABC transporters this ECF transporter provides the energy necessary to transport a number of different substrates. This Clostridium novyi (strain NT) protein is Energy-coupling factor transporter ATP-binding protein EcfA1.